The chain runs to 173 residues: Probable calcium-binding protein CML14 (173 aa).

4 EF-hand domains span residues 21–56, 57–92, 97–132, and 133–168; these read SQLK…LGLR, PTGD…VLTT, VDQA…LGQP, and LTFE…SALD. Positions 34, 36, 38, 40, 45, 70, 72, 74, 76, 81, 110, 112, 114, 121, 146, 148, 150, and 157 each coordinate Ca(2+).

Potential calcium sensor. The polypeptide is Probable calcium-binding protein CML14 (CML14) (Oryza sativa subsp. japonica (Rice)).